Consider the following 180-residue polypeptide: UPF0227 protein YcfP (180 aa).

It belongs to the UPF0227 family.

This chain is UPF0227 protein YcfP, found in Salmonella choleraesuis (strain SC-B67).